We begin with the raw amino-acid sequence, 519 residues long: T-complex protein 11-like protein 2 (519 aa).

Positions 1–30 are disordered; it reads MPFNGEKQCVGEDQPSDSDSSRFSESMASL. A Phosphoserine modification is found at Ser-16. Residues 17 to 29 are compositionally biased toward low complexity; it reads DSDSSRFSESMAS.

Belongs to the TCP11 family. Interacts with FMNL2; this interaction promotes muscle-derived satellite cell (MDSC) migration and differentiation.

It is found in the cytoplasm. The protein resides in the cytoskeleton. Functionally, promotes the migration of muscle-derived satellite cells (MDSCs) during differentiation throught interaction with FMNL2 and therefore may participate in microfilament assembly. This is T-complex protein 11-like protein 2 from Homo sapiens (Human).